The sequence spans 274 residues: Small ribosomal subunit protein uS2 (274 aa).

Belongs to the universal ribosomal protein uS2 family.

This chain is Small ribosomal subunit protein uS2, found in Syntrophobacter fumaroxidans (strain DSM 10017 / MPOB).